The sequence spans 475 residues: Aspartyl/glutamyl-tRNA(Asn/Gln) amidotransferase subunit B (475 aa).

The protein belongs to the GatB/GatE family. GatB subfamily. In terms of assembly, heterotrimer of A, B and C subunits.

The catalysed reaction is L-glutamyl-tRNA(Gln) + L-glutamine + ATP + H2O = L-glutaminyl-tRNA(Gln) + L-glutamate + ADP + phosphate + H(+). It catalyses the reaction L-aspartyl-tRNA(Asn) + L-glutamine + ATP + H2O = L-asparaginyl-tRNA(Asn) + L-glutamate + ADP + phosphate + 2 H(+). Allows the formation of correctly charged Asn-tRNA(Asn) or Gln-tRNA(Gln) through the transamidation of misacylated Asp-tRNA(Asn) or Glu-tRNA(Gln) in organisms which lack either or both of asparaginyl-tRNA or glutaminyl-tRNA synthetases. The reaction takes place in the presence of glutamine and ATP through an activated phospho-Asp-tRNA(Asn) or phospho-Glu-tRNA(Gln). The chain is Aspartyl/glutamyl-tRNA(Asn/Gln) amidotransferase subunit B from Thermoanaerobacter sp. (strain X514).